The sequence spans 467 residues: Congo red hypersensitive protein 2 (467 aa).

The N-terminal stretch at 1-23 (MAIVNSWLICLVSIFSFVVRVEA) is a signal peptide. Residue N28 is glycosylated (N-linked (GlcNAc...) asparagine). An intrachain disulfide couples C56 to C67. A GH16 domain is found at 63 to 280 (SHDSCMPVPI…WSGGEINWDA (218 aa)). N96 carries N-linked (GlcNAc...) asparagine glycosylation. The active-site Nucleophile is E166. E170 functions as the Proton donor in the catalytic mechanism. E170 lines the chitin pocket. N-linked (GlcNAc...) asparagine glycans are attached at residues N190, N196, N233, and N237. W257 contacts chitin. N261 is a glycosylation site (N-linked (GlcNAc...) asparagine). Residue T268 coordinates chitin. 2 N-linked (GlcNAc...) asparagine glycosylation sites follow: N297 and N310. A disordered region spans residues 337–444 (MDSDEGSGLD…SSSTSSMSGN (108 aa)). The span at 351–444 (ATTSSTQKSS…SSSTSSMSGN (94 aa)) shows a compositional bias: low complexity. N445 carries GPI-anchor amidated asparagine lipidation. Residues 446–467 (AGANVAANWRLTVLCVILGYVL) constitute a propeptide, removed in mature form.

This sequence belongs to the glycosyl hydrolase 16 family. CRH1 subfamily. Post-translationally, the GPI-anchor is attached to the protein in the endoplasmic reticulum and serves to target the protein to the cell surface. There, the glucosamine-inositol phospholipid moiety is cleaved off and the GPI-modified mannoprotein is covalently attached via its lipidless GPI glycan remnant to the 1,6-beta-glucan of the outer cell wall layer.

It localises to the secreted. The protein resides in the cell wall. It is found in the membrane. The enzyme catalyses Random endo-hydrolysis of N-acetyl-beta-D-glucosaminide (1-&gt;4)-beta-linkages in chitin and chitodextrins.. In terms of biological role, dual chitinase/transglycosylase that plays a role in cell wall architecture. Chitinase and transglycosylase activities are coupled. Required for the polysaccharide cross-linking at the septa and the cell wall. More specifically, transfers chitin to both beta(1-3)- and beta(1-6)glucan in the cell wall. The minimal number of intact hexopyranose units required in the molecule of the acceptor oligosaccharide is two and the effectivity of the acceptor increased with the increasing length of its oligosaccharide chain. The sequence is that of Congo red hypersensitive protein 2 from Saccharomyces cerevisiae (strain ATCC 204508 / S288c) (Baker's yeast).